The primary structure comprises 77 residues: MLALTRKAGERIVIGDNIVVTVVAIKGDSIRLTIDAPKEIKIYRGEIYDAIAAENKEAAVLMDLAELTALKEFHIKK.

It belongs to the CsrA/RsmA family. As to quaternary structure, homodimer; the beta-strands of each monomer intercalate to form a hydrophobic core, while the alpha-helices form wings that extend away from the core.

Its subcellular location is the cytoplasm. In terms of biological role, a translational regulator that binds mRNA to regulate translation initiation and/or mRNA stability. Usually binds in the 5'-UTR at or near the Shine-Dalgarno sequence preventing ribosome-binding, thus repressing translation. Its main target seems to be the major flagellin gene, while its function is anatagonized by FliW. The sequence is that of Translational regulator CsrA from Desulfitobacterium hafniense (strain DSM 10664 / DCB-2).